A 407-amino-acid chain; its full sequence is 12S rRNA N(4)-cytidine methyltransferase METTL15 (407 aa).

S-adenosyl-L-methionine contacts are provided by residues 100-102 (GGH), D119, F146, D169, and Q176. The residue at position 358 (S358) is a Phosphoserine.

This sequence belongs to the methyltransferase superfamily. RsmH family.

The protein resides in the mitochondrion matrix. The catalysed reaction is cytidine(839) in 12S rRNA + S-adenosyl-L-methionine = N(4)-methylcytidine(839) in 12S rRNA + S-adenosyl-L-homocysteine + H(+). N4-methylcytidine (m4C) methyltransferase responsible for the methylation of position C839 in mitochondrial 12S rRNA. Involved in the stabilization of 12S rRNA folding, therefore facilitating the assembly of the mitochondrial small ribosomal subunits. The chain is 12S rRNA N(4)-cytidine methyltransferase METTL15 from Homo sapiens (Human).